Consider the following 598-residue polypeptide: UvrABC system protein C (598 aa).

A GIY-YIG domain is found at 14-91; it reads DSPGCYLHKD…IQKNMPKYNI (78 aa). The UVR domain maps to 196–231; the sequence is DKIIEDLRSKMLAASEEMAFERAAEYRDLISGIATM.

Belongs to the UvrC family. As to quaternary structure, interacts with UvrB in an incision complex.

It is found in the cytoplasm. The UvrABC repair system catalyzes the recognition and processing of DNA lesions. UvrC both incises the 5' and 3' sides of the lesion. The N-terminal half is responsible for the 3' incision and the C-terminal half is responsible for the 5' incision. The protein is UvrABC system protein C of Streptococcus pyogenes serotype M3 (strain ATCC BAA-595 / MGAS315).